The following is a 961-amino-acid chain: MKEAKDARYTNGHLFTTISVSGMTMCYACNKSITAKEALICPTCNVTIHNRCKDTLANCTKVKQKQQKAALLKNNTALQSVSLRSKTTTRERPSSAIYPSDSFRQSLLGSRRGRSPLSLAKSVSTTNIAGHFNDESPLGLRRILSQSTDSLNMRNRTLSVESLIDEGAEVIYNELMSDFEMGEKDFAADSWSLAVDSSFLQQHKKEVMKQQDVIYELIQTELHHVRTLKIMTRLFRTGMLEELQLEPGVVQGLFPCVDELSDIHTRFLSQLLERRRQALCPGSPRNFVIHRLGDLLITQFSGPSADQMRKTYSEFCSRHTKALKLYKELYARDKRFQQFIRKVTRSAVLKRHGVQECILLVTQRITKYPVLISRILQHTHGIEEERQDLTTALGLVKELLSNVDQDVHELEKGARLQEIYNRMDPRAQTPVPGKGPFGREELLRRKLIHDGCLLWKTAAGRFKDVLMLLMTDVLVFLQEKDQKYIFPALDKPSVVSLQNLIVRDIANQEKGMFLISAAPPEMYEVHTASRDDRSTWIRVIQQSVRVCPSREDFPLIETEDEAYLRRIKMELQQKDRALVELLQEKVGLFAEMTHFQVEEDGGGGMPLPTLPRGLFRSESLESPRGERLLQDAIREVEGLKDLLVGPGVELLLTSREPALPVETDSGGNTSPGVTANGEARTFNGSIELCRADSDSSQKDRNGNQLRSPQEEALQRLVNLYGLLHGLQAAVAQQDTLMEARFPEGPERREKLTRANSRDGEAGRAGAAPVAPEKQATELALLQRQHALLQEELRRCRRLGEERATEAGSLEARLRESEQARALLEREVEEARRQLAALGHTEPLPAEAPWARRPLDPRRRSLPAGDALYLSFTPPQPSRGHDRLDLPVTIRSVHRPFEDRERQELGSPDERLQDSSDPDTGSEEEGSSSRLSPPHSPRDFTRMQDIPEETESRDGEPVASES.

The Phorbol-ester/DAG-type zinc-finger motif lies at Gly-12–Cys-59. 10 positions are modified to phosphoserine: Ser-82, Ser-95, Ser-102, Ser-106, Ser-110, Ser-124, Ser-136, Ser-145, Ser-147, and Ser-150. The interaction with DYNLT1 stretch occupies residues Arg-104–Asp-134. The DH domain occupies Lys-209–Asp-406. Lys-327 carries the post-translational modification N6-acetyllysine. Residues Lys-446 to Arg-545 form the PH domain. Positions Glu-561–Leu-588 form a coiled coil. Phosphoserine is present on residues Ser-619 and Ser-622. Thr-653 carries the post-translational modification Phosphothreonine; by MAPK1 or MAPK3. The tract at residues Leu-659–Ala-679 is disordered. Phosphoserine is present on residues Ser-665, Ser-670, Ser-685, and Ser-756. Residues Pro-742 to Ala-761 show a composition bias toward basic and acidic residues. Positions Pro-742–Ala-770 are disordered. The stretch at Glu-772–Glu-841 forms a coiled coil. Residue Ser-860 is modified to Phosphoserine; by PAK1 and AURKA. The disordered stretch occupies residues Leu-867–Ser-961. Residue Tyr-868 is modified to Phosphotyrosine. Ser-870 is modified (phosphoserine; by PAK4). Basic and acidic residues predominate over residues Arg-894–Asp-913. 3 positions are modified to phosphoserine: Ser-906, Ser-914, and Ser-915. Positions Ser-915–Gly-925 are enriched in acidic residues. Thr-919 is subject to Phosphothreonine. 4 positions are modified to phosphoserine: Ser-921, Ser-927, Ser-928, and Ser-931. A Phosphoserine; by CDK1 modification is found at Ser-935.

In terms of assembly, found in a complex composed at least of ARHGEF2, NOD2 and RIPK2. Interacts with RIPK2; the interaction mediates tyrosine phosphorylation of RIPK2 by Src kinase CSK. Interacts with RIPK1 and RIPK3. Interacts with YWHAZ/14-3-3 zeta; when phosphorylated at Ser-860. Interacts with the kinases PAK4, AURKA and MAPK1. Interacts with RHOA and RAC1. Interacts with NOD1. Interacts (via the N- terminal zinc finger) with CAPN6 (via domain II). Interacts with DYNLT1. Post-translationally, phosphorylation of Ser-860 by PAK1 induces binding to protein YWHAZ, promoting its relocation to microtubules and the inhibition of its activity. Phosphorylated by AURKA and CDK1 during mitosis, which negatively regulates its activity. Phosphorylation by MAPK1 or MAPK3 increases nucleotide exchange activity. Phosphorylation by PAK4 releases GEF-H1 from the microtubules. Phosphorylated on serine, threonine and tyrosine residues in a RIPK2-dependent manner.

It localises to the cytoplasm. The protein resides in the cytoskeleton. The protein localises to the cell junction. Its subcellular location is the tight junction. It is found in the golgi apparatus. It localises to the spindle. The protein resides in the cytoplasmic vesicle. Functionally, activates Rho-GTPases by promoting the exchange of GDP for GTP. May be involved in epithelial barrier permeability, cell motility and polarization, dendritic spine morphology, antigen presentation, leukemic cell differentiation, cell cycle regulation, innate immune response, and cancer. Binds Rac-GTPases, but does not seem to promote nucleotide exchange activity toward Rac-GTPases. May stimulate instead the cortical activity of Rac. Inactive toward CDC42, TC10, or Ras-GTPases. Forms an intracellular sensing system along with NOD1 for the detection of microbial effectors during cell invasion by pathogens. Involved in innate immune signaling transduction pathway promoting cytokine IL6/interleukin-6 and TNF-alpha secretion in macrophage upon stimulation by bacterial peptidoglycans; acts as a signaling intermediate between NOD2 receptor and RIPK2 kinase. Contributes to the tyrosine phosphorylation of RIPK2 through Src tyrosine kinase leading to NF-kappaB activation by NOD2. Overexpression activates Rho-, but not Rac-GTPases, and increases paracellular permeability. Involved in neuronal progenitor cell division and differentiation. Involved in the migration of precerebellar neurons. This is Rho guanine nucleotide exchange factor 2 (ARHGEF2) from Sus scrofa (Pig).